A 115-amino-acid chain; its full sequence is Ig heavy chain V region PJ14 (115 aa).

Positions 1–19 are cleaved as a signal peptide; it reads MAVLALLFCLVTFPSCILS. The Ig-like domain maps to 20–115; the sequence is QVQLKESGPG…TDDTARYYCA (96 aa).

This is Ig heavy chain V region PJ14 from Mus musculus (Mouse).